The sequence spans 366 residues: MRLSDFDFDLPEDRIALRPAEPRDSARFLVVRPGQAVADHIVSDLPDFLRPGDALVFNDTRVIPARLSGLREGRTTGGADGTPVAVEATLHRRLAPDRWSAFMRPGKRLKVGDRVAFGGHEGRVGDLGRLDAVIAEKHDGGEVVLAFDLSGPDLDVGIAQHGDMPLPPYIAAKRGEDERDRADYQTVYAREDGSVAAPTAGLHFTPQLLERLKAKGVSLHFVTLHVGAGTFLPVKTDEVSEHRMHAEYGQVTQEIADALNAARAAGGRIVCVGTTSLRLLESATGEDGIVRPFADETAIFITPGYRFRTADVLMTNFHLPKSTLFMLVSAFAGTEAMRAAYEHAIATGYRFYSYGDSSLLFKDETC.

The protein belongs to the QueA family. In terms of assembly, monomer.

Its subcellular location is the cytoplasm. It catalyses the reaction 7-aminomethyl-7-carbaguanosine(34) in tRNA + S-adenosyl-L-methionine = epoxyqueuosine(34) in tRNA + adenine + L-methionine + 2 H(+). It functions in the pathway tRNA modification; tRNA-queuosine biosynthesis. In terms of biological role, transfers and isomerizes the ribose moiety from AdoMet to the 7-aminomethyl group of 7-deazaguanine (preQ1-tRNA) to give epoxyqueuosine (oQ-tRNA). The chain is S-adenosylmethionine:tRNA ribosyltransferase-isomerase from Caulobacter vibrioides (strain ATCC 19089 / CIP 103742 / CB 15) (Caulobacter crescentus).